The following is a 250-amino-acid chain: UPF0259 membrane protein bbp_256 (250 aa).

Transmembrane regions (helical) follow at residues 21 to 41 (PIIV…DSII), 86 to 106 (FSLL…IQMT), 125 to 145 (FFKL…GFLL), 146 to 166 (YFIP…ILLI), 188 to 208 (IIVP…LIIS), and 216 to 236 (FLAY…LIIY).

Belongs to the UPF0259 family.

The protein localises to the cell membrane. In Buchnera aphidicola subsp. Baizongia pistaciae (strain Bp), this protein is UPF0259 membrane protein bbp_256.